A 255-amino-acid chain; its full sequence is Cysteine protease avirulence protein AvrRpt2 (255 aa).

Residues 1-50 form a disordered region; the sequence is MKIAPVAINHSPLSREVPSHAAPTQAKQTNLQSEAGDLDARKSSASSPET. Positions 1–71 are cleaved as a propeptide — removed in mature form; it reads MKIAPVAINH…RHKIEVPAFG (71 aa). A determinants of cleavage specificity region spans residues 70 to 71; the sequence is FG. Positions 76–100 are disordered; the sequence is KKSSKHETGGSSANADSSSVASDST. Residues 86-98 show a composition bias toward low complexity; it reads SSANADSSSVASD. Cys122 serves as the catalytic Nucleophile. Residues His208 and Asp226 contribute to the active site.

It belongs to the peptidase C70 family. Interacts physically with plant cell ROC1 (Arabidopsis single-domain cyclophilin) and RIN4. Autocleaved inside plant cells upon activation by cyclophilin. Cleavage is crucial in subcellular location and in eliciting HR. Inhibited by cyclosporin A (cyclophilin inhibitor).

It localises to the secreted. The protein localises to the host cell membrane. Its function is as follows. Effector protein involved in gene-for-gene resistance in plants expressing RPS2. Its thiol protease activity is required for the degradation of plant cell RIN4 and consequent activation of RPS2 during bacterial infection. The activation of RPS2 is sufficient for the induction of hypersensitive response (HR) and plant resistance. Cleavage of RIN4 by AvrRpt2 also interferes with RPM1-mediated resistance activated by either AvrRpm1 or AvrB. Contributes to virulence in plants lacking the resistance protein RPS2 promoting pathogen growth and disease symptoms. Inhibits PAMP (pathogen-associated molecular patterns)-induced signaling compromising the host's basal defense system. Blocks plant callose deposition, flg22 (a peptide corresponding to the most conserved domain of flagellin) induced accumulation of PR-1, PR-2 and PR-5 and activation of GST6 transcription. The mechanism of virulence is unknown, but this activity is independent of ethylene and salicylic acid response pathways and independent of RIN4 disappearance. This is Cysteine protease avirulence protein AvrRpt2 (avrRpt2) from Pseudomonas syringae pv. tomato.